Reading from the N-terminus, the 147-residue chain is UPF0735 ACT domain-containing protein Cthe_1377 (147 aa).

The ACT domain maps to 71–146 (TLFFTVEDYA…GVKRQEILAR (76 aa)).

It belongs to the UPF0735 family.

In Acetivibrio thermocellus (strain ATCC 27405 / DSM 1237 / JCM 9322 / NBRC 103400 / NCIMB 10682 / NRRL B-4536 / VPI 7372) (Clostridium thermocellum), this protein is UPF0735 ACT domain-containing protein Cthe_1377.